The sequence spans 2008 residues: Histone-lysine N-methyltransferase SETD1B (2008 aa).

The span at 1–20 (MSFREIKAGEKAKHPEDHGK) shows a compositional bias: basic and acidic residues. The disordered stretch occupies residues 1–42 (MSFREIKAGEKAKHPEDHGKKQSSSWINGMENSTQASTSVEK). Polar residues predominate over residues 22 to 39 (QSSSWINGMENSTQASTS). Residues 111 to 199 (DEFYVGPVPP…NIIHVELDTK (89 aa)) enclose the RRM domain. Disordered stretches follow at residues 249–390 (NLSS…SSYK), 402–652 (FPQS…APIT), 682–725 (PPGF…PPLP), 950–1172 (RKEP…DKRE), 1309–1328 (TKLP…PGRE), 1345–1461 (VPSS…FTPT), 1563–1600 (VGAS…MYSG), 1674–1712 (KEEE…PQFR), and 1814–1842 (EEPP…RRSE). Over residues 251–264 (SSVGSSVTPNSSTP) the composition is skewed to low complexity. Composition is skewed to polar residues over residues 265–293 (FSHD…QGTP), 301–315 (PFSQ…QTTP), 360–381 (HQFS…TPPL), 405–414 (SEEQPFAQTS), and 456–491 (DSNS…QHNS). Over residues 492 to 521 (LDSRIEMLLKEQRTKLPFLNEHDSDNEVRM) the composition is skewed to basic and acidic residues. Positions 524–537 (SPISSSSSQLSPIP) are enriched in low complexity. Polar residues-rich tracts occupy residues 540–560 (GSNS…SSTG) and 582–604 (ASLN…QLNR). 2 stretches are compositionally biased toward basic and acidic residues: residues 606-617 (SKVETLEVKEMV) and 626-636 (EKMDESQHSSG). Acidic residues predominate over residues 637–646 (EDMEISDDEM). The segment covering 979–997 (ERDRDASDTTSDLSKKDAE) has biased composition (basic and acidic residues). Acidic residues predominate over residues 1011–1020 (LDSEGEEGDE). Positions 1021–1031 (TSGKEEESSSE) are enriched in basic and acidic residues. 2 stretches are compositionally biased toward acidic residues: residues 1050–1094 (EEEE…EEDA) and 1105–1149 (ESSD…EDQD). The span at 1150–1172 (REAMVAETEHEPASHELPDDKRE) shows a compositional bias: basic and acidic residues. The span at 1345–1356 (VPSSTVPLPSTP) shows a compositional bias: low complexity. Positions 1378–1392 (SIEEEIPRTPGRDIL) are enriched in basic and acidic residues. The segment covering 1418-1427 (LTGSSLTLSS) has biased composition (low complexity). Basic residues-rich tracts occupy residues 1577-1587 (LPKRRPGRPRR) and 1681-1690 (KPKRQWRRQK). The span at 1699–1710 (IPSPEYSPPQPQ) shows a compositional bias: pro residues. The short motif at 1840-1845 (RSEQRR) is the RxxxRR motif element. An SET domain is found at 1869–1986 (KKLKFCKSHI…VNEEITYDYK (118 aa)). Position 1985 (Y1985) interacts with S-adenosyl-L-methionine. The Post-SET domain occupies 1992 to 2008 (VKIPCLCGSENCRGTLN).

This sequence belongs to the class V-like SAM-binding methyltransferase superfamily. Component of the SET1B/COMPASS complex.

It localises to the nucleus speckle. Its subcellular location is the chromosome. The catalysed reaction is L-lysyl(4)-[histone H3] + 3 S-adenosyl-L-methionine = N(6),N(6),N(6)-trimethyl-L-lysyl(4)-[histone H3] + 3 S-adenosyl-L-homocysteine + 3 H(+). Functionally, histone methyltransferase that specifically methylates 'Lys-4' of histone H3, when part of the SET1 histone methyltransferase (HMT) complex, but not if the neighboring 'Lys-9' residue is already methylated. H3 'Lys-4' methylation represents a specific tag for epigenetic transcriptional activation. The polypeptide is Histone-lysine N-methyltransferase SETD1B (SETD1B) (Gallus gallus (Chicken)).